We begin with the raw amino-acid sequence, 255 residues long: Small ribosomal subunit protein eS1 (255 aa).

Basic residues predominate over residues Met-1–Lys-18. The tract at residues Met-1 to Val-20 is disordered. Position 2 is an N-acetylalanine; partial (Ala-2).

The protein belongs to the eukaryotic ribosomal protein eS1 family. Component of the small ribosomal subunit. Mature ribosomes consist of a small (40S) and a large (60S) subunit. The 40S subunit contains about 33 different proteins and 1 molecule of RNA (18S). The 60S subunit contains about 49 different proteins and 3 molecules of RNA (25S, 5.8S and 5S).

The protein localises to the cytoplasm. The protein is Small ribosomal subunit protein eS1 of Coccidioides immitis (strain RS) (Valley fever fungus).